Reading from the N-terminus, the 238-residue chain is MTDTAENQTPNDRQAGHPRSIRSFVLRQSHMTAAQQRAIDTLWDSFGIDYQATPADLDARFGSSRPKILEIGFGMGMASAEIARRLPETDFLAIDVHGPGVGNLLKLINENHLENIRVMRHDAVEVVKNMLQDGSLDGIHIFFPDPWHKKRHHKRRLIQAPFIAKLLPKLKTGGYIHLATDWEEYAQQMLEVLSSFDSLQNTAADYAPTPDYRPETKFEARGKRLGHGVWDLVFKRIG.

The span at 1–12 (MTDTAENQTPND) shows a compositional bias: polar residues. Residues 1 to 20 (MTDTAENQTPNDRQAGHPRS) form a disordered region. 4 residues coordinate S-adenosyl-L-methionine: glutamate 70, aspartate 95, aspartate 122, and aspartate 145. The active site involves aspartate 145. Residues lysine 149, aspartate 181, and 216-219 (TKFE) contribute to the substrate site.

This sequence belongs to the class I-like SAM-binding methyltransferase superfamily. TrmB family.

It catalyses the reaction guanosine(46) in tRNA + S-adenosyl-L-methionine = N(7)-methylguanosine(46) in tRNA + S-adenosyl-L-homocysteine. Its pathway is tRNA modification; N(7)-methylguanine-tRNA biosynthesis. Its function is as follows. Catalyzes the formation of N(7)-methylguanine at position 46 (m7G46) in tRNA. The polypeptide is tRNA (guanine-N(7)-)-methyltransferase (Neisseria gonorrhoeae (strain NCCP11945)).